The chain runs to 482 residues: Mannose-1-phosphate guanylyltransferase 2 (482 aa).

It belongs to the mannose-6-phosphate isomerase type 2 family.

The enzyme catalyses alpha-D-mannose 1-phosphate + GTP + H(+) = GDP-alpha-D-mannose + diphosphate. Its pathway is nucleotide-sugar biosynthesis; GDP-alpha-D-mannose biosynthesis; GDP-alpha-D-mannose from alpha-D-mannose 1-phosphate (GTP route): step 1/1. Functionally, involved in GDP-mannose biosynthesis which serves as the activated sugar nucleotide precursor for mannose residues in cell surface polysaccharides. This enzyme participates in synthesis of the LPS O antigen. This is Mannose-1-phosphate guanylyltransferase 2 (manC2) from Escherichia coli O157:H7.